Here is a 269-residue protein sequence, read N- to C-terminus: MTNLIRSNFQDHPFHLVSPSPWPLYTSVSLLNLATSAALSMHNFNNSYYLFFISLILVISSMAFWFRDIISEATLLGDHTLAVQKGLNLGVILFIVSEALFFLAIFWAFFHSSLTPTVELGSQWPPIGIEPINPFELPLLNTVILLSSGATVTYAHHSLIHGERKGALYGSIITILLAIIFTVFQGVEYNVSSFTISDGAFGTCFYFGTGFHGFHVIIGTIFLAVALWRIFAYHLTDNHHVGFEGGILYWHFVDVVWLFLYVSIYYWGS.

A run of 6 helical transmembrane segments spans residues 46 to 66, 90 to 110, 138 to 160, 167 to 187, 207 to 227, and 247 to 267; these read NSYY…AFWF, GVIL…WAFF, PLLN…HSLI, ALYG…FQGV, FGTG…AVAL, and ILYW…IYYW.

It belongs to the cytochrome c oxidase subunit 3 family. In terms of assembly, component of the cytochrome c oxidase (complex IV, CIV), a multisubunit enzyme composed of a catalytic core of 3 subunits and several supernumerary subunits. The complex exists as a monomer or a dimer and forms supercomplexes (SCs) in the inner mitochondrial membrane with ubiquinol-cytochrome c oxidoreductase (cytochrome b-c1 complex, complex III, CIII).

Its subcellular location is the mitochondrion inner membrane. The enzyme catalyses 4 Fe(II)-[cytochrome c] + O2 + 8 H(+)(in) = 4 Fe(III)-[cytochrome c] + 2 H2O + 4 H(+)(out). In terms of biological role, component of the cytochrome c oxidase, the last enzyme in the mitochondrial electron transport chain which drives oxidative phosphorylation. The respiratory chain contains 3 multisubunit complexes succinate dehydrogenase (complex II, CII), ubiquinol-cytochrome c oxidoreductase (cytochrome b-c1 complex, complex III, CIII) and cytochrome c oxidase (complex IV, CIV), that cooperate to transfer electrons derived from NADH and succinate to molecular oxygen, creating an electrochemical gradient over the inner membrane that drives transmembrane transport and the ATP synthase. Cytochrome c oxidase is the component of the respiratory chain that catalyzes the reduction of oxygen to water. Electrons originating from reduced cytochrome c in the intermembrane space (IMS) are transferred via the dinuclear copper A center (CU(A)) of subunit 2 and heme A of subunit 1 to the active site in subunit 1, a binuclear center (BNC) formed by heme A3 and copper B (CU(B)). The BNC reduces molecular oxygen to 2 water molecules using 4 electrons from cytochrome c in the IMS and 4 protons from the mitochondrial matrix. This chain is Cytochrome c oxidase subunit 3 (COIII), found in Podospora anserina (strain S / ATCC MYA-4624 / DSM 980 / FGSC 10383) (Pleurage anserina).